The primary structure comprises 432 residues: Adenosylhomocysteinase (432 aa).

Residues T56, D131, and E156 each coordinate substrate. 157-159 (TTT) is a binding site for NAD(+). Residues K186 and D190 each coordinate substrate. NAD(+) is bound by residues 222 to 227 (GDVGKG), E243, N248, 299 to 301 (IGH), N346, H353, K426, 426 to 430 (KPDHY), and Y430.

The protein belongs to the adenosylhomocysteinase family. In terms of assembly, interacts with AhcyL1; the interaction may negatively regulate Ahcy catalytic activity. Requires NAD(+) as cofactor.

It catalyses the reaction S-adenosyl-L-homocysteine + H2O = L-homocysteine + adenosine. Its pathway is amino-acid biosynthesis; L-homocysteine biosynthesis; L-homocysteine from S-adenosyl-L-homocysteine: step 1/1. Its function is as follows. Adenosylhomocysteine is a competitive inhibitor of S-adenosyl-L-methionine-dependent methyl transferase reactions; therefore adenosylhomocysteinase may play a key role in the control of methylations via regulation of the intracellular concentration of adenosylhomocysteine. This Drosophila melanogaster (Fruit fly) protein is Adenosylhomocysteinase.